The primary structure comprises 250 residues: UPF0736 protein BLi01230/BL03322 (250 aa).

The protein belongs to the UPF0736 family.

The protein is UPF0736 protein BLi01230/BL03322 of Bacillus licheniformis (strain ATCC 14580 / DSM 13 / JCM 2505 / CCUG 7422 / NBRC 12200 / NCIMB 9375 / NCTC 10341 / NRRL NRS-1264 / Gibson 46).